The following is a 260-amino-acid chain: MIIVLSPAKSLDYETPAHVQSYTQPAFVDDASELIAGLRKLSPQDIATLMDISDPLARLNYQRYADWSPIFTPANSKQAVLAFNGDVYEGFDAKSLSAADLDYAQQHVRVLSGLYGLLRPLDLLQPYRLEMGTRFANTRGKDLYAFWGDRITRALNEQLETRRGASRVLINCASTEYFKSVKPKLLAAPVITPVFEDWKGGRYKIISFHAKRARGLMARYVVENRIAEPKALQAFAMEGYAFDAAASNDSTYVYRRRVGE.

Belongs to the UPF0246 family.

This chain is UPF0246 protein Bmul_1054/BMULJ_02209, found in Burkholderia multivorans (strain ATCC 17616 / 249).